The sequence spans 142 residues: AP-2 complex subunit sigma (142 aa).

This sequence belongs to the adaptor complexes small subunit family. Adaptor protein complex 2 (AP-2) is a heterotetramer composed of two large adaptins (alpha-type and beta-type subunits), a medium adaptin (mu-type subunit AP50) and a small adaptin (sigma-type subunit AP17).

The protein localises to the cell membrane. It is found in the membrane. It localises to the coated pit. In terms of biological role, component of the adaptor complexes which link clathrin to receptors in coated vesicles. Clathrin-associated protein complexes are believed to interact with the cytoplasmic tails of membrane proteins, leading to their selection and concentration. This Dictyostelium discoideum (Social amoeba) protein is AP-2 complex subunit sigma (ap2s1).